A 110-amino-acid chain; its full sequence is Chagasin (110 aa).

Positions 29–34 (NPTTGF) match the BC loop motif. Residues 59 to 68 (PPDSKLLGAG) carry the DE loop motif. The FG loop motif lies at 91–100 (RPWTGPSHDS).

Belongs to the protease inhibitor I42 family. In terms of assembly, interacts with cruzipain.

The protein localises to the flagellar pocket. Its subcellular location is the cytoplasmic vesicle. The protein resides in the cell surface. Functionally, cysteine protease inhibitor. Inhibits cysteine protease cruzipain. This is Chagasin (cha) from Trypanosoma cruzi.